We begin with the raw amino-acid sequence, 104 residues long: L-rhamnose mutarotase (104 aa).

Residue Tyr18 participates in substrate binding. His22 acts as the Proton donor in catalysis. Substrate contacts are provided by residues Tyr41 and 76–77 (WW).

The protein belongs to the rhamnose mutarotase family. In terms of assembly, homodimer.

The protein localises to the cytoplasm. It catalyses the reaction alpha-L-rhamnose = beta-L-rhamnose. Its pathway is carbohydrate metabolism; L-rhamnose metabolism. Involved in the anomeric conversion of L-rhamnose. This Klebsiella pneumoniae (strain 342) protein is L-rhamnose mutarotase.